The chain runs to 348 residues: 4-hydroxy-2-oxovalerate aldolase 1 (348 aa).

The region spanning 8–260 (ITVHDMTLRD…QTGVDVWAIQ (253 aa)) is the Pyruvate carboxyltransferase domain. Position 16–17 (16–17 (RD)) interacts with substrate. Asp17 is a binding site for Mn(2+). His20 functions as the Proton acceptor in the catalytic mechanism. Residues Ser170 and His199 each coordinate substrate. Positions 199 and 201 each coordinate Mn(2+). Tyr290 is a binding site for substrate.

This sequence belongs to the 4-hydroxy-2-oxovalerate aldolase family.

It catalyses the reaction (S)-4-hydroxy-2-oxopentanoate = acetaldehyde + pyruvate. The sequence is that of 4-hydroxy-2-oxovalerate aldolase 1 from Cupriavidus metallidurans (strain ATCC 43123 / DSM 2839 / NBRC 102507 / CH34) (Ralstonia metallidurans).